The primary structure comprises 326 residues: Triacylglycerol lipase 2 (326 aa).

The short motif at 142-146 (AHSMG) is the (A/G)XSXG lipase motif element.

As to quaternary structure, interacts with MIA40; forms mixed disulfide intermediates with MIA40.

The protein resides in the mitochondrion. It localises to the mitochondrion intermembrane space. The catalysed reaction is a triacylglycerol + H2O = a diacylglycerol + a fatty acid + H(+). It catalyses the reaction 1,2,3-tri-(9Z-octadecenoyl)-glycerol + H2O = di-(9Z)-octadecenoylglycerol + (9Z)-octadecenoate + H(+). The enzyme catalyses 1,2,3-tributanoylglycerol + H2O = dibutanoylglycerol + butanoate + H(+). It carries out the reaction 1,2,3-trioctanoylglycerol + H2O = dioctanoylglycerol + octanoate + H(+). The catalysed reaction is di-(9Z)-octadecenoylglycerol + H2O = (9Z-octadecenoyl)-glycerol + (9Z)-octadecenoate + H(+). It catalyses the reaction dioctanoylglycerol + H2O = octanoylglycerol + octanoate + H(+). Its function is as follows. Mitochondrial triacylglycerol (TAG) lipase with activity toward long-chain diacylglycerols (DAGs) and triacylglycerols (TAGs). Involved in mitochondrial lipid metabolism. In Saccharomyces cerevisiae (strain ATCC 204508 / S288c) (Baker's yeast), this protein is Triacylglycerol lipase 2 (TGL2).